We begin with the raw amino-acid sequence, 772 residues long: Ion-translocating oxidoreductase complex subunit C (772 aa).

4Fe-4S ferredoxin-type domains lie at 369–397 (GEPQ…QQLY) and 407–436 (KATT…VQYF). Positions 377, 380, 383, 387, 416, 419, 422, and 426 each coordinate [4Fe-4S] cluster. The segment at 599 to 748 (KARKLEQQQA…EPEEQVDPRK (150 aa)) is disordered.

Belongs to the 4Fe4S bacterial-type ferredoxin family. RnfC subfamily. In terms of assembly, the complex is composed of six subunits: RsxA, RsxB, RsxC, RsxD, RsxE and RsxG. It depends on [4Fe-4S] cluster as a cofactor.

It is found in the cell inner membrane. Its function is as follows. Part of a membrane-bound complex that couples electron transfer with translocation of ions across the membrane. Required to maintain the reduced state of SoxR. The sequence is that of Ion-translocating oxidoreductase complex subunit C from Shigella dysenteriae serotype 1 (strain Sd197).